A 334-amino-acid chain; its full sequence is MKILITGTAGFIGSHLAKKLIKQGHYVIGVDSINDYYSVSLKEDRLKSIGKENFTFNKVKLENYDDLSKVFVDEQPEVVVNLAAQAGVRYSIENPRTYIDSNIVGFMNILECSRHFNIQNLIYASSSSVYGANTSKPFSTSDNIDHPLSLYAATKKSNELMAHTYSHLYNLPTTGLRFFTVYGPWGRPDMALFKFTKAIVNDQAIDVYNHGNMMRDFTYVDDIVEAISRLVKKPASPNKEWSGADPDPGSSYAPYKVYNIGNNSPVRLMEFVEAIENKLGKEARKNYMDLQPGDVPETYANVDDLFRDIDFKPETTIQDGVNKFVDWYLEYYKK.

Position 126 (serine 126) interacts with substrate. The Proton acceptor role is filled by tyrosine 151.

It belongs to the NAD(P)-dependent epimerase/dehydratase family.

It functions in the pathway capsule biogenesis; capsule polysaccharide biosynthesis. Required for the biosynthesis of type 1 capsular polysaccharide. This chain is Protein CapI (capI), found in Staphylococcus aureus.